Here is a 285-residue protein sequence, read N- to C-terminus: Putative phosphatase MG125 (285 aa).

The Nucleophile role is filled by Asp-8. A Mg(2+)-binding site is contributed by Asp-8. Leu-9 serves as a coordination point for phosphate. Asp-10 serves as a coordination point for Mg(2+). Residues 44–45 and Lys-205 each bind phosphate; that span reads TG. Positions 228 and 229 each coordinate Mg(2+). Residue Asn-231 participates in phosphate binding.

The protein belongs to the HAD-like hydrolase superfamily. Cof family. Mg(2+) serves as cofactor.

This is Putative phosphatase MG125 from Mycoplasma genitalium (strain ATCC 33530 / DSM 19775 / NCTC 10195 / G37) (Mycoplasmoides genitalium).